A 648-amino-acid polypeptide reads, in one-letter code: DNA gyrase subunit B (648 aa).

The 115-residue stretch at 427 to 541 folds into the Toprim domain; sequence TELFIVEGDS…AGYVYIAQPP (115 aa). The Mg(2+) site is built by E433, D506, and D508.

This sequence belongs to the type II topoisomerase GyrB family. As to quaternary structure, heterotetramer, composed of two GyrA and two GyrB chains. In the heterotetramer, GyrA contains the active site tyrosine that forms a transient covalent intermediate with DNA, while GyrB binds cofactors and catalyzes ATP hydrolysis. Requires Mg(2+) as cofactor. It depends on Mn(2+) as a cofactor. Ca(2+) is required as a cofactor.

It is found in the cytoplasm. The enzyme catalyses ATP-dependent breakage, passage and rejoining of double-stranded DNA.. A type II topoisomerase that negatively supercoils closed circular double-stranded (ds) DNA in an ATP-dependent manner to modulate DNA topology and maintain chromosomes in an underwound state. Negative supercoiling favors strand separation, and DNA replication, transcription, recombination and repair, all of which involve strand separation. Also able to catalyze the interconversion of other topological isomers of dsDNA rings, including catenanes and knotted rings. Type II topoisomerases break and join 2 DNA strands simultaneously in an ATP-dependent manner. This Streptococcus pneumoniae serotype 4 (strain ATCC BAA-334 / TIGR4) protein is DNA gyrase subunit B.